The sequence spans 1834 residues: Non-reducing polyketide synthase spyA (1834 aa).

The region spanning 91 to 255 (LAPLTVIIHL…TRIPIYGRYH (165 aa)) is the Starter acyltransferase (SAT) domain. Residues 385–801 (EHSIAVIGAA…GNNTAVIVCE (417 aa)) enclose the Ketosynthase family 3 (KS3) domain. Active-site for beta-ketoacyl synthase activity residues include Cys-551, His-687, and His-724. Residues 919 to 1164 (YEGSSLLRSH…KELGPCTWVE (246 aa)) enclose the Malonyl-CoA:ACP transacylase (MAT) domain. The interval 1269 to 1398 (PLVYLLRDEG…GVISLRQERH (130 aa)) is N-terminal hotdog fold. Positions 1269 to 1577 (PLVYLLRDEG…FVRITASSLN (309 aa)) constitute a PKS/mFAS DH domain. The tract at residues 1269–1577 (PLVYLLRDEG…FVRITASSLN (309 aa)) is product template (PT) domain. A C-terminal hotdog fold region spans residues 1428 to 1577 (AISLKEGIIY…FVRITASSLN (150 aa)). Residues 1616 to 1690 (SDILSILSHL…TLCQEIQTQR (75 aa)) enclose the Carrier 1 domain. The residue at position 1650 (Ser-1650) is an O-(pantetheine 4'-phosphoryl)serine. Residues 1693–1720 (RLARASRTTTATRNTSFSLGRRTSSTES) form a disordered region. Residues 1697–1710 (ASRTTTATRNTSFS) are compositionally biased toward low complexity. Residues 1731-1807 (SKSAAVLAQL…GLARLILASE (77 aa)) enclose the Carrier 2 domain. Residue Ser-1767 is modified to O-(pantetheine 4'-phosphoryl)serine.

Pantetheine 4'-phosphate is required as a cofactor.

The enzyme catalyses 2 malonyl-CoA + acetyl-CoA + 2 H(+) = triacetate lactone + 2 CO2 + 3 CoA. It participates in secondary metabolite biosynthesis; terpenoid biosynthesis. In terms of biological role, non-reducing polyketide synthase; part of the gene cluster that mediates the biosynthesis of meroterpenoids called sartorypyrones. The biosynthesis of sartorypyrones begins with the production of triacetic acid lactone (TAL) by the NR-PKS spyA using one molecule of acetyl-CoA and two molecules of malonyl-CoA. As spyA lacks a thioesterase (TE) domain, TAL is likely generated through self-release from spyA by spontaneous lactonization. After production of TAL, the prenyltransferase spyF then conjugates geranylgeranyl pyrophosphate (GGPP) to TAL to form geranylgeranyl-triacetate lactone, for which the pathway-specific geranylgeranyl pyrophosphate synthase (GGPS) spyE is required to provide GGPP. Subsequently, geranylgeranyl-triacetate lactone is epoxidized at the terminal olein by the FAD-dependent monooxygenase spyC, followed by cyclization of the terpenoid component catalyzed by the terpene cyclase spyD to produce both the bicyclic sartorypyrone F and the monocyclic sartorypyrone D. Finally, the last step of the biosynthesis involves the acetylation of the meroterpenoids sartorypyrones D and F by the acetyltransferase SpyB to produce sartorypyrones A and G, respectively. The polypeptide is Non-reducing polyketide synthase spyA (Aspergillus fumigatus (strain ATCC MYA-4609 / CBS 101355 / FGSC A1100 / Af293) (Neosartorya fumigata)).